The sequence spans 255 residues: Geranylgeranylglyceryl phosphate synthase (255 aa).

Positions 26 and 55 each coordinate Mg(2+). Residues 174–180 (YLEAGSG), 205–206 (GG), and 227–228 (GT) each bind sn-glycerol 1-phosphate.

This sequence belongs to the GGGP/HepGP synthase family. Group II subfamily. Mg(2+) is required as a cofactor.

It is found in the cytoplasm. It carries out the reaction sn-glycerol 1-phosphate + (2E,6E,10E)-geranylgeranyl diphosphate = sn-3-O-(geranylgeranyl)glycerol 1-phosphate + diphosphate. It participates in membrane lipid metabolism; glycerophospholipid metabolism. Prenyltransferase that catalyzes the transfer of the geranylgeranyl moiety of geranylgeranyl diphosphate (GGPP) to the C3 hydroxyl of sn-glycerol-1-phosphate (G1P). This reaction is the first ether-bond-formation step in the biosynthesis of archaeal membrane lipids. The chain is Geranylgeranylglyceryl phosphate synthase from Thermococcus sibiricus (strain DSM 12597 / MM 739).